Reading from the N-terminus, the 1883-residue chain is Zinc finger protein 106 (1883 aa).

Residues isoleucine 6 and lysine 37 each participate in a glycyl lysine isopeptide (Lys-Gly) (interchain with G-Cter in SUMO2) cross-link. A C2H2-type 1; atypical zinc finger spans residues 20-44 (HECRVCGVTEVGLSAYAKHISGQLH). The disordered stretch occupies residues 39–162 (ISGQLHKDNV…NGGGPRGRSG (124 aa)). Positions 52–67 (EREDDGKGEEEEEDYF) are enriched in acidic residues. Residues lysine 69 and lysine 76 each participate in a glycyl lysine isopeptide (Lys-Gly) (interchain with G-Cter in SUMO2) cross-link. Basic and acidic residues-rich tracts occupy residues 77 to 86 (QRKEQSRQDE), 96 to 116 (SDDR…DRES), and 128 to 138 (PQRDWKWEKDG). Lysine 133 participates in a covalent cross-link: Glycyl lysine isopeptide (Lys-Gly) (interchain with G-Cter in SUMO2). Positions 139–148 (FNNTRKNSFP) are enriched in polar residues. Residues lysine 243, lysine 287, and lysine 305 each participate in a glycyl lysine isopeptide (Lys-Gly) (interchain with G-Cter in SUMO2) cross-link. Polar residues predominate over residues 322 to 338 (QTTKQADTATSKVSGKN). Residues 322–356 (QTTKQADTATSKVSGKNGSAAREKPRRWTPYPSQK) form a disordered region. Glycyl lysine isopeptide (Lys-Gly) (interchain with G-Cter in SUMO2) cross-links involve residues lysine 356, lysine 365, lysine 371, and lysine 417. Residues 389–423 (IQEPQTDETRNSPTQKTQKEIHTGSLNHKASSDSA) form a disordered region. Residues 412-423 (GSLNHKASSDSA) show a composition bias toward polar residues. Phosphoserine is present on serine 422. Glycyl lysine isopeptide (Lys-Gly) (interchain with G-Cter in SUMO2) cross-links involve residues lysine 451, lysine 461, lysine 477, lysine 492, lysine 505, lysine 515, lysine 525, lysine 539, and lysine 557. The interval 457 to 501 (CPATKSLSQKQDPKNISKNTKTNFFSPGEHSNPSNKPTVEDNHGP) is disordered. Over residues 461–493 (KSLSQKQDPKNISKNTKTNFFSPGEHSNPSNKP) the composition is skewed to polar residues. A disordered region spans residues 586–637 (LEDESDGETSDTEKHGTKIGTLGSATTELLSGSTRTADEKEEDDRILKTSRE). Position 590 is a phosphoserine (serine 590). Residue lysine 603 forms a Glycyl lysine isopeptide (Lys-Gly) (interchain with G-Cter in SUMO2) linkage. Positions 608-620 (GSATTELLSGSTR) are enriched in polar residues. Phosphoserine is present on residues serine 641 and serine 661. Residues lysine 671, lysine 684, lysine 705, lysine 721, lysine 741, lysine 775, and lysine 807 each participate in a glycyl lysine isopeptide (Lys-Gly) (interchain with G-Cter in SUMO2) cross-link. Phosphoserine occurs at positions 859, 861, 864, and 893. Residues 879 to 945 (EEGTGKENEP…HSAQLSSDHI (67 aa)) form a disordered region. A compositionally biased stretch (polar residues) spans 888-906 (PQQMVSPSNSLRAGQSQKA). Residues lysine 905 and lysine 911 each participate in a glycyl lysine isopeptide (Lys-Gly) (interchain with G-Cter in SUMO2) cross-link. A Phosphoserine modification is found at serine 937. A Glycyl lysine isopeptide (Lys-Gly) (interchain with G-Cter in SUMO2) cross-link involves residue lysine 953. Polar residues predominate over residues 958 to 976 (QERSIPPSENQNSQESNGE). 4 disordered regions span residues 958–982 (QERS…CLSS), 997–1048 (ATDS…KERS), 1121–1140 (EPSE…RRNS), and 1182–1218 (PTFQ…VPPS). Threonine 1021 bears the Phosphothreonine mark. A phosphoserine mark is found at serine 1025, serine 1026, and serine 1031. Over residues 1035-1045 (KNKRRKIKGKK) the composition is skewed to basic residues. A Phosphoserine modification is found at serine 1249. The segment at 1252–1483 (ESTESFHEPS…EVSSTSEIGT (232 aa)) is disordered. The span at 1255-1277 (ESFHEPSQELKFSVEQRNTRNRE) shows a compositional bias: basic and acidic residues. Lysine 1265 is covalently cross-linked (Glycyl lysine isopeptide (Lys-Gly) (interchain with G-Cter in SUMO2)). 2 stretches are compositionally biased toward polar residues: residues 1278-1291 (NSPS…SSIN) and 1299-1312 (KGNS…SSFL). Phosphoserine occurs at positions 1279, 1281, and 1284. Lysine 1299 participates in a covalent cross-link: Glycyl lysine isopeptide (Lys-Gly) (interchain with G-Cter in SUMO2). Serine 1302 bears the Phosphoserine mark. Lysine 1324 participates in a covalent cross-link: Glycyl lysine isopeptide (Lys-Gly) (interchain with G-Cter in SUMO2). Position 1328 is a phosphoserine (serine 1328). Residues 1333–1346 (PEQQAESTLTSAET) are compositionally biased toward polar residues. A compositionally biased stretch (basic residues) spans 1349–1362 (SKKKKKLRKKKSLR). At serine 1370 the chain carries Phosphoserine. Threonine 1372 is subject to Phosphothreonine. Residues lysine 1380, lysine 1392, and lysine 1395 each participate in a glycyl lysine isopeptide (Lys-Gly) (interchain with G-Cter in SUMO2) cross-link. Basic and acidic residues-rich tracts occupy residues 1402–1416 (EDSR…VRDE) and 1444–1456 (GEEK…KKDI). Lysine 1454 is covalently cross-linked (Glycyl lysine isopeptide (Lys-Gly) (interchain with G-Cter in SUMO2)). Positions 1457 to 1481 (WNSTEQNPLETSRSGCDEVSSTSEI) are enriched in polar residues. At serine 1468 the chain carries Phosphoserine. Glycyl lysine isopeptide (Lys-Gly) (interchain with G-Cter in SUMO2) cross-links involve residues lysine 1486 and lysine 1504. Residues 1502 to 1513 (SIKGSKNSSEIS) show a composition bias toward polar residues. Residues 1502-1527 (SIKGSKNSSEISSEPGDDDEPTEGSF) are disordered. 6 WD repeats span residues 1529–1568 (GHQA…GVFE), 1570–1611 (HTSK…CVEQ), 1654–1695 (HGPR…LLRT), 1698–1737 (GHSK…RIYK), 1738–1775 (GHNH…RLQV), and 1778–1815 (GHKD…NYRC). Lysine 1585 is covalently cross-linked (Glycyl lysine isopeptide (Lys-Gly) (interchain with G-Cter in SUMO2)). Lysine 1737 is covalently cross-linked (Glycyl lysine isopeptide (Lys-Gly) (interchain with G-Cter in SUMO2)). The C2H2-type 2; atypical zinc-finger motif lies at 1813–1838 (YRCWWHGCSLIFGVVDHLKQHLLTDH). Lysine 1864 is covalently cross-linked (Glycyl lysine isopeptide (Lys-Gly) (interchain with G-Cter in SUMO2)).

In terms of assembly, interacts with KNOP1. Interacts with TARDBP and NUP107. Interacts (via N-terminus) with RBM39. Interacts with the SH3 domains of FYN and GRB2. Phosphorylated by FYN in vitro.

The protein resides in the nucleus. The protein localises to the nucleolus. Its subcellular location is the nucleus speckle. In terms of biological role, RNA-binding protein. Specifically binds to 5'-GGGGCC-3' sequence repeats in RNA. Essential for maintenance of peripheral motor neuron and skeletal muscle function. Required for normal expression and/or alternative splicing of a number of genes in spinal cord and skeletal muscle, including the neurite outgrowth inhibitor RTN4. Also contributes to normal mitochondrial respiratory function in motor neurons, via an unknown mechanism. This Homo sapiens (Human) protein is Zinc finger protein 106 (ZNF106).